Consider the following 341-residue polypeptide: Ketol-acid reductoisomerase (NADP(+)) (341 aa).

The KARI N-terminal Rossmann domain maps to 1-182 (MATIYYDKDA…GCTRAGVLET (182 aa)). NADP(+) contacts are provided by residues 25–28 (YGSQ), serine 51, serine 53, and 83–86 (DQTQ). Histidine 108 is an active-site residue. Glycine 134 contributes to the NADP(+) binding site. The KARI C-terminal knotted domain maps to 183-328 (TFKEETETDL…KRLRDMMSWI (146 aa)). Positions 191, 195, 227, and 231 each coordinate Mg(2+). Position 252 (serine 252) interacts with substrate.

This sequence belongs to the ketol-acid reductoisomerase family. It depends on Mg(2+) as a cofactor.

The catalysed reaction is (2R)-2,3-dihydroxy-3-methylbutanoate + NADP(+) = (2S)-2-acetolactate + NADPH + H(+). The enzyme catalyses (2R,3R)-2,3-dihydroxy-3-methylpentanoate + NADP(+) = (S)-2-ethyl-2-hydroxy-3-oxobutanoate + NADPH + H(+). It participates in amino-acid biosynthesis; L-isoleucine biosynthesis; L-isoleucine from 2-oxobutanoate: step 2/4. Its pathway is amino-acid biosynthesis; L-valine biosynthesis; L-valine from pyruvate: step 2/4. Involved in the biosynthesis of branched-chain amino acids (BCAA). Catalyzes an alkyl-migration followed by a ketol-acid reduction of (S)-2-acetolactate (S2AL) to yield (R)-2,3-dihydroxy-isovalerate. In the isomerase reaction, S2AL is rearranged via a Mg-dependent methyl migration to produce 3-hydroxy-3-methyl-2-ketobutyrate (HMKB). In the reductase reaction, this 2-ketoacid undergoes a metal-dependent reduction by NADPH to yield (R)-2,3-dihydroxy-isovalerate. The protein is Ketol-acid reductoisomerase (NADP(+)) of Anaeromyxobacter dehalogenans (strain 2CP-C).